Reading from the N-terminus, the 206-residue chain is Ribosomal RNA small subunit methyltransferase G (206 aa).

S-adenosyl-L-methionine-binding positions include Gly-71, Phe-76, 125-126 (IE), and Arg-139.

The protein belongs to the methyltransferase superfamily. RNA methyltransferase RsmG family.

It is found in the cytoplasm. The catalysed reaction is guanosine(527) in 16S rRNA + S-adenosyl-L-methionine = N(7)-methylguanosine(527) in 16S rRNA + S-adenosyl-L-homocysteine. Its function is as follows. Specifically methylates the N7 position of guanine in position 527 of 16S rRNA. The polypeptide is Ribosomal RNA small subunit methyltransferase G (Cereibacter sphaeroides (strain ATCC 17023 / DSM 158 / JCM 6121 / CCUG 31486 / LMG 2827 / NBRC 12203 / NCIMB 8253 / ATH 2.4.1.) (Rhodobacter sphaeroides)).